Consider the following 499-residue polypeptide: Putative sperm motility kinase W (499 aa).

Positions 14–262 (YKVLFTLGHG…IEDIERHPWV (249 aa)) constitute a Protein kinase domain. Residues 20 to 28 (LGHGSFGTV) and Lys43 each bind ATP. Asp133 functions as the Proton acceptor in the catalytic mechanism. The 41-residue stretch at 274 to 314 (DPDYNIIEMLCGMGFDANEILESLQRKKYNESMGAYLILKA) folds into the UBA domain.

It belongs to the protein kinase superfamily. CAMK Ser/Thr protein kinase family. Smok subfamily.

It catalyses the reaction L-seryl-[protein] + ATP = O-phospho-L-seryl-[protein] + ADP + H(+). The catalysed reaction is L-threonyl-[protein] + ATP = O-phospho-L-threonyl-[protein] + ADP + H(+). In terms of biological role, may play a role in sperm motility, especially in the regulation of flagellar function. The protein is Putative sperm motility kinase W of Mus musculus (Mouse).